Here is a 90-residue protein sequence, read N- to C-terminus: Small ribosomal subunit protein bS16 (90 aa).

The protein belongs to the bacterial ribosomal protein bS16 family.

The chain is Small ribosomal subunit protein bS16 from Bacillus anthracis (strain A0248).